Here is a 344-residue protein sequence, read N- to C-terminus: N-acetyl-gamma-glutamyl-phosphate reductase (344 aa).

Cys149 is a catalytic residue.

The protein belongs to the NAGSA dehydrogenase family. Type 1 subfamily.

The protein localises to the cytoplasm. It catalyses the reaction N-acetyl-L-glutamate 5-semialdehyde + phosphate + NADP(+) = N-acetyl-L-glutamyl 5-phosphate + NADPH + H(+). Its pathway is amino-acid biosynthesis; L-arginine biosynthesis; N(2)-acetyl-L-ornithine from L-glutamate: step 3/4. Its function is as follows. Catalyzes the NADPH-dependent reduction of N-acetyl-5-glutamyl phosphate to yield N-acetyl-L-glutamate 5-semialdehyde. The sequence is that of N-acetyl-gamma-glutamyl-phosphate reductase from Shouchella clausii (strain KSM-K16) (Alkalihalobacillus clausii).